A 342-amino-acid chain; its full sequence is Methylthioribose-1-phosphate isomerase (342 aa).

Substrate is bound by residues 44–46 (RGA), Arg87, and Gln194. The active-site Proton donor is the Asp235. 245-246 (NK) is a substrate binding site.

Belongs to the eIF-2B alpha/beta/delta subunits family. MtnA subfamily.

The catalysed reaction is 5-(methylsulfanyl)-alpha-D-ribose 1-phosphate = 5-(methylsulfanyl)-D-ribulose 1-phosphate. It functions in the pathway amino-acid biosynthesis; L-methionine biosynthesis via salvage pathway; L-methionine from S-methyl-5-thio-alpha-D-ribose 1-phosphate: step 1/6. In terms of biological role, catalyzes the interconversion of methylthioribose-1-phosphate (MTR-1-P) into methylthioribulose-1-phosphate (MTRu-1-P). This is Methylthioribose-1-phosphate isomerase from Acetivibrio thermocellus (strain ATCC 27405 / DSM 1237 / JCM 9322 / NBRC 103400 / NCIMB 10682 / NRRL B-4536 / VPI 7372) (Clostridium thermocellum).